The primary structure comprises 236 residues: Phosphoribosylaminoimidazole-succinocarboxamide synthase (236 aa).

Belongs to the SAICAR synthetase family.

It catalyses the reaction 5-amino-1-(5-phospho-D-ribosyl)imidazole-4-carboxylate + L-aspartate + ATP = (2S)-2-[5-amino-1-(5-phospho-beta-D-ribosyl)imidazole-4-carboxamido]succinate + ADP + phosphate + 2 H(+). It functions in the pathway purine metabolism; IMP biosynthesis via de novo pathway; 5-amino-1-(5-phospho-D-ribosyl)imidazole-4-carboxamide from 5-amino-1-(5-phospho-D-ribosyl)imidazole-4-carboxylate: step 1/2. The polypeptide is Phosphoribosylaminoimidazole-succinocarboxamide synthase (Campylobacter jejuni subsp. jejuni serotype O:6 (strain 81116 / NCTC 11828)).